The primary structure comprises 1453 residues: Collagen alpha-1(I) chain (1453 aa).

The signal sequence occupies residues 1–22; that stretch reads MFSFVDLRLLLLLGATALLTHG. A propeptide spans 23-151 (N-terminal propeptide); sequence QEDIPEVSCI…PPGLGGNFAS (129 aa). A VWFC domain is found at 29-87; it reads VSCIHNGLRVPNGETWKPEVCLICICHNGTAVCDDVQCNEELDCPNPQRREGECCAFCP. N-linked (GlcNAc...) asparagine glycosylation is present at Asn-56. Residues 94 to 1210 form a disordered region; that stretch reads NSEDVGVEGP…GGRYYRADDA (1117 aa). 2 stretches are compositionally biased toward pro residues: residues 109-118 and 128-143; these read PQGPRGPVGP and PGLP…PGPP. The tract at residues 152–167 is nonhelical region (N-terminal); sequence QMSYGYDEKSAGVSVP. Lys-160 bears the Allysine mark. Ser-161 is modified (phosphoserine). A triple-helical region region spans residues 168-1181; it reads GPMGPSGPRG…PGPPGPPGPP (1014 aa). 4-hydroxyproline is present on residues Pro-179, Pro-182, Pro-185, Pro-194, Pro-197, Pro-200, Pro-215, Pro-230, Pro-236, Pro-245, and Pro-251. Residues 198-207 show a composition bias toward gly residues; the sequence is GEPGGSGPMG. Positions 218 to 232 are enriched in basic and acidic residues; that stretch reads NGDDGEAGKPGRPGE. Lys-254 carries the post-translational modification 5-hydroxylysine; alternate. O-linked (Gal...) hydroxylysine; alternate glycosylation occurs at Lys-254. A Phosphoserine modification is found at Ser-260. Residues 268–284 are compositionally biased toward low complexity; the sequence is DAGPAGPKGEPGSPGEN. A 4-hydroxyproline mark is found at Pro-278, Pro-281, Pro-287, Pro-296, and Pro-302. Positions 307–320 are enriched in low complexity; sequence TAGARGNDGAVGAA. The span at 322-334 shows a compositional bias: pro residues; the sequence is PPGPTGPTGPPGF. 4-hydroxyproline occurs at positions 323, 332, 335, 362, 365, 377, 383, 392, 398, 401, and 416. A compositionally biased stretch (low complexity) spans 368–407; it reads AGAAGPAGNPGADGQPGAKGANGAPGIAGAPGFPGARGPS. Position 419 is a 5-hydroxylysine (Lys-419). 4-hydroxyproline occurs at positions 425, 428, 440, 449, 464, 470, 479, and 485. Positions 474-483 are enriched in gly residues; the sequence is GERGGPGSRG. Lys-494 bears the 5-hydroxylysine mark. Residues 499-515 show a composition bias toward low complexity; sequence ERGAPGPAGPKGSPGEA. 4-hydroxyproline occurs at positions 503, 512, 518, 524, 533, 536, 545, 554, 560, 572, 581, 590, 593, 611, 629, 635, 641, 647, 653, 659, 671, 680, 692, 704, 707, 713, 719, and 728. Low complexity predominate over residues 527–566; that stretch reads KGLTGSPGSPGPDGKTGPPGPAGQDGRPGPAGPPGARGQA. Residues 623 to 650 are compositionally biased toward low complexity; sequence QGPAGSPGFQGLPGPAGPPGEAGKPGEQ. 2 stretches are compositionally biased toward low complexity: residues 685-695 and 703-716; these read PRGNNGAPGND and APGA…PGLQ. The Cell attachment site signature appears at 734-736; sequence RGD. A 5-hydroxylysine modification is found at Lys-740. A 4-hydroxyproline mark is found at Pro-746, Pro-761, and Pro-767. Ser-776 carries the post-translational modification Phosphoserine. Pro-788, Pro-797, Pro-806, Pro-812, Pro-830, Pro-839, and Pro-848 each carry 4-hydroxyproline. The segment covering 800–815 has biased composition (low complexity); sequence AGFAGPPGADGQPGAK. The segment covering 829 to 841 has biased composition (pro residues); the sequence is PPGPAGPAGPPGP. The segment covering 842-872 has biased composition (low complexity); it reads IGNVGAPGPKGPRGAAGPPGATGFPGAAGRV. 5-hydroxylysine is present on Lys-851. 2 positions are modified to 4-hydroxyproline: Pro-860 and Pro-866. Pro-874 carries the 3-hydroxyproline modification. 16 positions are modified to 4-hydroxyproline: Pro-875, Pro-884, Pro-887, Pro-908, Pro-917, Pro-926, Pro-935, Pro-953, Pro-962, Pro-965, Pro-971, Pro-986, Pro-992, Pro-998, Pro-1007, and Pro-1013. The span at 901 to 910 shows a compositional bias: low complexity; the sequence is ETGPAGRPGE. The segment covering 920–935 has biased composition (low complexity); sequence AGEKGSPGADGPAGSP. Residues 985-995 show a composition bias toward pro residues; sequence PPGPMGPPGLA. The segment covering 997–1012 has biased composition (low complexity); that stretch reads PPGESGREGSPGAEGS. Lys-1022 carries the post-translational modification 5-hydroxylysine. Residues 1031–1046 show a composition bias toward pro residues; sequence AGPPGAPGAPGAPGPV. Residues Pro-1034, Pro-1037, and Pro-1040 each carry the 4-hydroxyproline modification. The segment covering 1067 to 1081 has biased composition (low complexity); it reads IGPAGARGPAGPQGP. A Cell attachment site motif is present at residues 1082–1084; that stretch reads RGD. The segment covering 1082-1096 has biased composition (basic and acidic residues); the sequence is RGDKGETGEQGDRGI. The residue at position 1085 (Lys-1085) is a 5-hydroxylysine. A 5-hydroxylysine; alternate modification is found at Lys-1097. A glycan (O-linked (Gal...) hydroxylysine; alternate) is linked at Lys-1097. Residues 1102 to 1148 are compositionally biased toward low complexity; that stretch reads FSGLQGPPGSPGSPGEQGPSGASGPAGPRGPPGSAGSPGKDGLNGLP. Residues Pro-1109, Pro-1112, Pro-1115, Pro-1133, and Pro-1148 each carry the 4-hydroxyproline modification. A 3-hydroxyproline modification is found at Pro-1153. 4-hydroxyproline is present on Pro-1154. Pro residues predominate over residues 1166 to 1181; sequence AGPPGPPGPPGPPGPP. Residue Pro-1168 is modified to 3-hydroxyproline. 4-hydroxyproline is present on Pro-1169. Pro-1171 is subject to 3-hydroxyproline. Position 1172 is a 4-hydroxyproline (Pro-1172). Residue Pro-1174 is modified to 3-hydroxyproline. 4-hydroxyproline is present on residues Pro-1175, Pro-1178, and Pro-1181. The nonhelical region (C-terminal) stretch occupies residues 1182–1207; the sequence is SGGYDFSFLPQPPQEKSQDGGRYYRA. Allysine is present on Lys-1197. A compositionally biased stretch (basic and acidic residues) spans 1197-1210; the sequence is KSQDGGRYYRADDA. Residues 1208–1453 constitute a propeptide, C-terminal propeptide; that stretch reads DDANVVRDRD…GLDIGPACFV (246 aa). The region spanning 1218–1453 is the Fibrillar collagen NC1 domain; the sequence is LEVDTTLKSL…GLDIGPACFV (236 aa). Intrachain disulfides connect Cys-1248-Cys-1280, Cys-1288-Cys-1451, and Cys-1359-Cys-1404. The Ca(2+) site is built by Asp-1266, Asn-1268, Gln-1269, Cys-1271, and Asp-1274. N-linked (GlcNAc...) asparagine glycosylation is present at Asn-1354.

It belongs to the fibrillar collagen family. In terms of assembly, trimers of one alpha 2(I) and two alpha 1(I) chains. Interacts with MRC2. Interacts with TRAM2. Interacts with MFAP4 in a Ca (2+)-dependent manner. Post-translationally, contains mostly 4-hydroxyproline. Proline residues at the third position of the tripeptide repeating unit (G-X-Y) are hydroxylated in some or all of the chains. In terms of processing, contains 3-hydroxyproline at a few sites. This modification occurs on the first proline residue in the sequence motif Gly-Pro-Hyp, where Hyp is 4-hydroxyproline. Lysine residues at the third position of the tripeptide repeating unit (G-X-Y) are 5-hydroxylated in some or all of the chains. Post-translationally, O-glycosylated on hydroxylated lysine residues. The O-linked glycan consists of a Glc-Gal disaccharide. In terms of tissue distribution, forms the fibrils of tendon, ligaments and bones. In bones the fibrils are mineralized with calcium hydroxyapatite.

It localises to the secreted. It is found in the extracellular space. The protein resides in the extracellular matrix. Functionally, type I collagen is a member of group I collagen (fibrillar forming collagen). This chain is Collagen alpha-1(I) chain, found in Mus musculus (Mouse).